A 203-amino-acid chain; its full sequence is Small ribosomal subunit protein uS4 (203 aa).

The S4 RNA-binding domain maps to 93-156 (RRLDNVVYRL…MKVPAILEAV (64 aa)).

This sequence belongs to the universal ribosomal protein uS4 family. Part of the 30S ribosomal subunit. Contacts protein S5. The interaction surface between S4 and S5 is involved in control of translational fidelity.

One of the primary rRNA binding proteins, it binds directly to 16S rRNA where it nucleates assembly of the body of the 30S subunit. Its function is as follows. With S5 and S12 plays an important role in translational accuracy. The sequence is that of Small ribosomal subunit protein uS4 from Streptococcus equi subsp. equi (strain 4047).